Here is a 513-residue protein sequence, read N- to C-terminus: 2,3-bisphosphoglycerate-independent phosphoglycerate mutase (513 aa).

Mn(2+)-binding residues include aspartate 13 and serine 63. The active-site Phosphoserine intermediate is the serine 63. Substrate contacts are provided by residues histidine 124, 154–155 (RD), arginine 186, arginine 192, 262–265 (RADR), and lysine 335. Aspartate 402, histidine 406, aspartate 443, histidine 444, and histidine 462 together coordinate Mn(2+).

The protein belongs to the BPG-independent phosphoglycerate mutase family. In terms of assembly, monomer. It depends on Mn(2+) as a cofactor.

It carries out the reaction (2R)-2-phosphoglycerate = (2R)-3-phosphoglycerate. It functions in the pathway carbohydrate degradation; glycolysis; pyruvate from D-glyceraldehyde 3-phosphate: step 3/5. In terms of biological role, catalyzes the interconversion of 2-phosphoglycerate and 3-phosphoglycerate. In Photobacterium profundum (strain SS9), this protein is 2,3-bisphosphoglycerate-independent phosphoglycerate mutase.